The chain runs to 159 residues: SsrA-binding protein (159 aa).

It belongs to the SmpB family.

Its subcellular location is the cytoplasm. Functionally, required for rescue of stalled ribosomes mediated by trans-translation. Binds to transfer-messenger RNA (tmRNA), required for stable association of tmRNA with ribosomes. tmRNA and SmpB together mimic tRNA shape, replacing the anticodon stem-loop with SmpB. tmRNA is encoded by the ssrA gene; the 2 termini fold to resemble tRNA(Ala) and it encodes a 'tag peptide', a short internal open reading frame. During trans-translation Ala-aminoacylated tmRNA acts like a tRNA, entering the A-site of stalled ribosomes, displacing the stalled mRNA. The ribosome then switches to translate the ORF on the tmRNA; the nascent peptide is terminated with the 'tag peptide' encoded by the tmRNA and targeted for degradation. The ribosome is freed to recommence translation, which seems to be the essential function of trans-translation. In Coxiella burnetii (strain RSA 331 / Henzerling II), this protein is SsrA-binding protein.